Reading from the N-terminus, the 189-residue chain is FAS1 domain-containing protein mug57 (189 aa).

The N-terminal stretch at 1–24 (MMKLFCLNIFRFLYTTSFISAVLS) is a signal peptide. The region spanning 37-182 (EPRLFELLAE…GEMWVLNATL (146 aa)) is the FAS1 domain.

The protein resides in the cytoplasm. Its subcellular location is the nucleus. It localises to the membrane. Its function is as follows. Has a role in sporulation. In Schizosaccharomyces pombe (strain 972 / ATCC 24843) (Fission yeast), this protein is FAS1 domain-containing protein mug57 (mug57).